A 271-amino-acid polypeptide reads, in one-letter code: Zinc-finger homeodomain protein 8 (271 aa).

Ser-16 is modified (phosphoserine). Residues 56–107 (YKECLKNHAAGIGGHALDGCGEFMPSPSFNSNDPASLTCAACGCHRNFHRRE) form a ZF-HD dimerization-type; degenerate zinc finger. The interval 125 to 154 (HNRHQLPPPPPPHLAGIRSPDDDDSASPPP) is disordered. The homeobox DNA-binding region spans 179–242 (RKRFRTKFSQ…NNKISGRSGA (64 aa)).

Homo- and heterodimer with other ZFHD proteins. Interacts with MIF1, MIF2 and MIF3; these interactions prevent nuclear localization and DNA-binding to inhibit transcription regulation activity. Binds to ZHD1, ZHD2, ZHD4, ZHD10 and ZHD11. Interacts with HIPP30. In terms of tissue distribution, mostly expressed in flowers and inflorescence.

The protein resides in the nucleus. Its function is as follows. Putative transcription factor. The protein is Zinc-finger homeodomain protein 8 (ZHD8) of Arabidopsis thaliana (Mouse-ear cress).